We begin with the raw amino-acid sequence, 568 residues long: Zinc finger protein 648 (568 aa).

Basic and acidic residues predominate over residues 1–11 (MAQVDSQDRWG). The disordered stretch occupies residues 1–106 (MAQVDSQDRW…MSGKASWSRD (106 aa)). C2H2-type zinc fingers lie at residues 279–301 (YACE…RRLH), 307–329 (YQCS…IRTH), 335–358 (YPCP…RNMH), 364–386 (FPCS…QRTH), 392–414 (FRCP…QRVH), 420–442 (FPCP…QTLH), 448–470 (FKCA…QRIH), 476–498 (FPCT…QQIH), 504–526 (FLCA…IRMH), and 532–554 (YQCE…RAKH). Residues 548–568 (QRHRAKHGTCKKEPIPSSSDE) form a disordered region.

Belongs to the krueppel C2H2-type zinc-finger protein family.

The protein resides in the nucleus. May be involved in transcriptional regulation. The polypeptide is Zinc finger protein 648 (ZNF648) (Homo sapiens (Human)).